The following is a 172-amino-acid chain: Zinc finger C2HC domain-containing protein 1B (172 aa).

2 consecutive C2HC/C3H-type zinc fingers follow at residues 14 to 43 and 117 to 146; these read KLFP…VFNK and DYIQ…QTSR. Positions 18, 21, 33, 37, 121, 124, 136, and 140 each coordinate Zn(2+).

The protein belongs to the ZC2HC1 family. It depends on Zn(2+) as a cofactor.

This Mus musculus (Mouse) protein is Zinc finger C2HC domain-containing protein 1B (Zc2hc1b).